The sequence spans 1417 residues: Cytoadherence-linked asexual protein 3.1 (1417 aa).

An N-terminal signal peptide occupies residues 1-24 (MVSFFKTPIFILIIFLYLNEKVIC). 4 disulfides stabilise this stretch: Cys-333–Cys-361, Cys-407–Cys-413, Cys-517–Cys-545, and Cys-521–Cys-542. A helical transmembrane segment spans residues 1204–1224 (LANGFMYAFCFFAISQMYAYF). A disordered region spans residues 1383-1417 (TYIDTEKMNEADSADSDDEKDSDTPDDELMISRFH). The span at 1394-1411 (DSADSDDEKDSDTPDDEL) shows a compositional bias: acidic residues.

As to quaternary structure, self-associates. Component of the RhopH complex. RhopH complex is at least composed of CLAG3.1/CLAG3.2, RhopH2 and RhopH3 with a 1:1:1 subunit stoichiometry. CLAG3.1/CLAG3.2 mediates subunit association through independent contacts with RhopH2 and RhopH3, which do not directly interact with one another. Interacts with RhopH2. Interacts with RhopH3.

It localises to the host cell membrane. It is found in the host cytoplasm. The protein localises to the cytoplasmic vesicle. The protein resides in the secretory vesicle. Its subcellular location is the rhoptry. Participates in the formation of new permeability pathways in Plasmodium-infected erythrocytes enabling the uptake of nutrients from the blood plasma. The sequence is that of Cytoadherence-linked asexual protein 3.1 from Plasmodium falciparum.